The following is a 180-amino-acid chain: Translation initiation factor IF-3 (180 aa).

Belongs to the IF-3 family. In terms of assembly, monomer.

Its subcellular location is the cytoplasm. In terms of biological role, IF-3 binds to the 30S ribosomal subunit and shifts the equilibrium between 70S ribosomes and their 50S and 30S subunits in favor of the free subunits, thus enhancing the availability of 30S subunits on which protein synthesis initiation begins. The chain is Translation initiation factor IF-3 from Pectobacterium atrosepticum (strain SCRI 1043 / ATCC BAA-672) (Erwinia carotovora subsp. atroseptica).